The primary structure comprises 390 residues: 3-ketoacyl-CoA thiolase (390 aa).

Catalysis depends on Cys95, which acts as the Acyl-thioester intermediate. Active-site proton acceptor residues include His346 and Cys376.

The protein belongs to the thiolase-like superfamily. Thiolase family. In terms of assembly, heterotetramer of two alpha chains (FadB) and two beta chains (FadA).

The protein localises to the cytoplasm. It carries out the reaction an acyl-CoA + acetyl-CoA = a 3-oxoacyl-CoA + CoA. It participates in lipid metabolism; fatty acid beta-oxidation. Its function is as follows. Catalyzes the final step of fatty acid oxidation in which acetyl-CoA is released and the CoA ester of a fatty acid two carbons shorter is formed. The chain is 3-ketoacyl-CoA thiolase from Psychrobacter cryohalolentis (strain ATCC BAA-1226 / DSM 17306 / VKM B-2378 / K5).